Here is a 448-residue protein sequence, read N- to C-terminus: MKERSTELVEGFRHSVPYINAHRGKTFVIMLGGEAIAHENFTNIINDIGLLHSLGIRLVVVYGARPQIEQNLADHHYEPVYHKHTRVTDNKTLELVKQSAGLLQLDITARLSMNLNNTPLQGANINVVSGNFIIAQPLGVDDGVDYCHSGKIRRIDEHAINRQLDNGAIVLIGPVAVSVTGESFNLAFEDVATQLAIKLQAEKLIGFCSTQGVQDKDGKILSEVFLNQAPELIKELEVKGDYYSGTVCFLRSAIKACRRGVRRSHLLSYQADGSLLQELFSRDGIGTQIVMESAEQIRRANINDIGGILELIRPLEQQGILVRRSREQLEREIDKFIIIERDNLTIACAALYPYPEEKIGEMACLAVNPKYRSSLRGEVLLNRIAEHAKQLGLEKLFVLTTRSIHWFQERGFEPAELSMLPIQKQVLYNYQRRSKILMLNLEPQPGFT.

The 139-residue stretch at 295–433 (EQIRRANIND…KQVLYNYQRR (139 aa)) folds into the N-acetyltransferase domain.

It belongs to the acetyltransferase family. ArgA subfamily. Homohexamer.

It localises to the cytoplasm. The enzyme catalyses L-glutamate + acetyl-CoA = N-acetyl-L-glutamate + CoA + H(+). Its pathway is amino-acid biosynthesis; L-arginine biosynthesis; N(2)-acetyl-L-ornithine from L-glutamate: step 1/4. The protein is Amino-acid acetyltransferase of Photorhabdus laumondii subsp. laumondii (strain DSM 15139 / CIP 105565 / TT01) (Photorhabdus luminescens subsp. laumondii).